The chain runs to 105 residues: Thioredoxin (105 aa).

One can recognise a Thioredoxin domain in the interval 2-103 (VKQIESKSAF…KEKLEATIKG (102 aa)). Lys-3 is modified (N6-acetyllysine). Position 8 is an N6-succinyllysine (Lys-8). Catalysis depends on nucleophile residues Cys-32 and Cys-35. A disulfide bridge connects residues Cys-32 and Cys-35. Position 39 is an N6-acetyllysine (Lys-39). S-nitrosocysteine occurs at positions 62 and 69. Cys-73 carries the post-translational modification S-nitrosocysteine; alternate. Lys-94 carries the N6-acetyllysine; alternate modification. N6-succinyllysine; alternate is present on Lys-94.

Belongs to the thioredoxin family. As to quaternary structure, homodimer; disulfide-linked. Interacts with TXNIP through the redox-active site. Interacts with MAP3K5 and CASP3. Interacts with APEX1; the interaction stimulates the FOS/JUN AP-1 DNA-binding activity in a redox-dependent manner. In terms of processing, in the fully reduced protein, both Cys-69 and Cys-73 are nitrosylated in response to nitric oxide (NO). When two disulfide bonds are present in the protein, only Cys-73 is nitrosylated. Cys-73 can serve as donor for nitrosylation of target proteins.

The protein localises to the nucleus. It localises to the cytoplasm. The protein resides in the secreted. Participates in various redox reactions through the reversible oxidation of its active center dithiol to a disulfide and catalyzes dithiol-disulfide exchange reactions. Plays a role in the reversible S-nitrosylation of cysteine residues in target proteins, and thereby contributes to the response to intracellular nitric oxide. Nitrosylates the active site Cys of CASP3 in response to nitric oxide (NO), and thereby inhibits caspase-3 activity. Induces the FOS/JUN AP-1 DNA binding activity in ionizing radiation (IR) cells through its oxidation/reduction status and stimulates AP-1 transcriptional activity. This is Thioredoxin (TXN) from Equus caballus (Horse).